Here is a 123-residue protein sequence, read N- to C-terminus: Protein Wnt-7a (123 aa).

Ser-1 carries O-palmitoleoyl serine; by PORCN lipidation. The tract at residues 33 to 61 (VEPVRASRNKRPTFLKIKKPLSYLKPMDT) is disordered linker. A disulfide bridge links Cys-89 with Cys-104. A glycan (N-linked (GlcNAc...) asparagine) is linked at Asn-90.

Belongs to the Wnt family. Palmitoleoylation is required for efficient binding to frizzled receptors. Depalmitoleoylation leads to Wnt signaling pathway inhibition.

Its subcellular location is the secreted. The protein localises to the extracellular space. It is found in the extracellular matrix. Ligand for members of the frizzled family of seven transmembrane receptors that functions in the canonical Wnt/beta-catenin signaling pathway. Plays an important role in embryonic development, including dorsal versus ventral patterning during limb development, skeleton development and urogenital tract development. Required for central nervous system (CNS) angiogenesis and blood-brain barrier regulation. This chain is Protein Wnt-7a (WNT-7A), found in Plethodon jordani (Red-cheeked salamander).